The following is a 205-amino-acid chain: uncharacterized protein (205 aa).

2 helical membrane-spanning segments follow: residues 12–32 (WQIY…GVGF) and 49–69 (WISS…VMSW).

It is found in the host membrane. This is an uncharacterized protein from Haemophilus influenzae (Bacteriophage HP1).